We begin with the raw amino-acid sequence, 273 residues long: Dermonecrotic toxin LapSicTox-alphaIB1aiv (273 aa).

H5 is an active-site residue. Mg(2+) contacts are provided by E25 and D27. Catalysis depends on H41, which acts as the Nucleophile. Intrachain disulfides connect C45–C51 and C47–C190. Position 85 (D85) interacts with Mg(2+). N-linked (GlcNAc...) asparagine glycosylation is present at N250.

This sequence belongs to the arthropod phospholipase D family. Class II subfamily. The cofactor is Mg(2+). As to expression, expressed by the venom gland.

It localises to the secreted. The enzyme catalyses an N-(acyl)-sphingosylphosphocholine = an N-(acyl)-sphingosyl-1,3-cyclic phosphate + choline. It catalyses the reaction an N-(acyl)-sphingosylphosphoethanolamine = an N-(acyl)-sphingosyl-1,3-cyclic phosphate + ethanolamine. It carries out the reaction a 1-acyl-sn-glycero-3-phosphocholine = a 1-acyl-sn-glycero-2,3-cyclic phosphate + choline. The catalysed reaction is a 1-acyl-sn-glycero-3-phosphoethanolamine = a 1-acyl-sn-glycero-2,3-cyclic phosphate + ethanolamine. Its function is as follows. Dermonecrotic toxins cleave the phosphodiester linkage between the phosphate and headgroup of certain phospholipids (sphingolipid and lysolipid substrates), forming an alcohol (often choline) and a cyclic phosphate. This toxin acts on sphingomyelin (SM). It may also act on ceramide phosphoethanolamine (CPE), lysophosphatidylcholine (LPC) and lysophosphatidylethanolamine (LPE), but not on lysophosphatidylserine (LPS), and lysophosphatidylglycerol (LPG). It acts by transphosphatidylation, releasing exclusively cyclic phosphate products as second products. Induces dermonecrosis, hemolysis, increased vascular permeability, edema, inflammatory response, and platelet aggregation. The chain is Dermonecrotic toxin LapSicTox-alphaIB1aiv from Loxosceles apachea (Apache recluse spider).